Here is a 314-residue protein sequence, read N- to C-terminus: tRNA uridine(34) hydroxylase (314 aa).

Residues 140–234 (SRDDVILVDT…YLEETPAEES (95 aa)) form the Rhodanese domain. C194 serves as the catalytic Cysteine persulfide intermediate.

The protein belongs to the TrhO family.

It carries out the reaction uridine(34) in tRNA + AH2 + O2 = 5-hydroxyuridine(34) in tRNA + A + H2O. Functionally, catalyzes oxygen-dependent 5-hydroxyuridine (ho5U) modification at position 34 in tRNAs. The protein is tRNA uridine(34) hydroxylase of Acinetobacter baylyi (strain ATCC 33305 / BD413 / ADP1).